Here is a 583-residue protein sequence, read N- to C-terminus: MSQVIEPQLDRTTYYSILGLTSNATSSEVHKSYLKLARLLHPDKTKSDKSEELFKAVVHAHSILTDEDQKLRYDRDLKIKGLHTYQPKKNCHIFKTKAKESQGASPTLGQSEAYHRQNKPYEQQPYGFGVGKKMTSSSKSKVPIFKSFNLKSYQRNHYYSSKKERKHGSPDIDSLFHETNGASKVRMTDAGKMDTNSQFQEIWEILGKNAYTHKSYSEDPNSCLGSALSDHEEEEEAGKQQQQQQQQQQQQQHYGMTSKSSSPDEEKKNNKEPKRESRVSPEENGEEETGHKQFKLPKTSTFSSGSHDSNLQSPFYNHEYRHYARSKFECKNQFRKSVSPIKEIPATTSANEGWNILRDIIEKLNISNVDDRNKDLLFRRDEIGDKNHSDSIDIENLSIKEPKGMKRRKKDDISLEELFQSLPREKDYFMMDAINDSLESINLFKKPKTTQSHEQGGTFAQAESNRAKFKPLLEQCGITPEILDLEIPEIPEFDAVADLETLKLNVQLFNNQCNKLKETIHQVSLQRLRADTQFSDMLTQKQSIMVWKTYLEFDKSLMDKLNILQERQMQVIKIFSERCDGKV.

Residues 11–79 (RTTYYSILGL…KLRYDRDLKI (69 aa)) enclose the J domain. Positions 215 to 224 (SYSEDPNSCL) are enriched in polar residues. The disordered stretch occupies residues 215-313 (SYSEDPNSCL…SGSHDSNLQS (99 aa)). Phosphoserine is present on Ser-229. Over residues 240 to 252 (QQQQQQQQQQQQQ) the composition is skewed to low complexity. Residues 262–281 (SPDEEKKNNKEPKRESRVSP) show a composition bias toward basic and acidic residues. Polar residues predominate over residues 298–313 (KTSTFSSGSHDSNLQS).

It is found in the cytoplasm. The protein resides in the nucleus. The protein is J protein JJJ2 (JJJ2) of Saccharomyces cerevisiae (strain ATCC 204508 / S288c) (Baker's yeast).